Here is a 216-residue protein sequence, read N- to C-terminus: UPF0301 protein Nham_3550 (216 aa).

Residues 1-10 show a composition bias toward basic residues; sequence MSAARKRPGT. A disordered region spans residues 1-25; the sequence is MSAARKRPGTGRRQTDDADTGAPDQ.

It belongs to the UPF0301 (AlgH) family.

This is UPF0301 protein Nham_3550 from Nitrobacter hamburgensis (strain DSM 10229 / NCIMB 13809 / X14).